The following is a 699-amino-acid chain: Cell pattern formation-associated protein StuA (699 aa).

Disordered stretches follow at residues M1–P20 and T31–H97. The segment covering P32 to S49 has biased composition (low complexity). Residues N52–P61 show a composition bias toward polar residues. The span at E75–E84 shows a compositional bias: acidic residues. Residues R226–P332 form the HTH APSES-type domain. Positions G260–E281 form a DNA-binding region, H-T-H motif. 3 disordered regions span residues A372–M594, R599–N618, and P674–G699. Polar residues predominate over residues G376–G423. Composition is skewed to basic and acidic residues over residues R428–R438 and G478–R491. Polar residues predominate over residues N520 to D529. The segment covering R535–R545 has biased composition (basic and acidic residues). The segment covering T566–M594 has biased composition (polar residues). The tract at residues T669–Q695 is nuclear localization domain.

This sequence belongs to the EFG1/PHD1/stuA family.

The protein localises to the nucleus. Transcription factor that regulates asexual reproduction. Binds the StuA-response elements (StRE) with the consensus sequence 5'-(A/T)CGCG(T/A)N(A/C)-3' at the promoters of target genes. Controls the expression of the gene clusters involved in the production of deoxynivalenol (DON) and 15-acetyldeoxynivalenol (15ADON). Regulates the expression of genes involved in chitin and glucan metabolism. Also controls catalase activity and cell surface hydrophobicity. Plays an important role in pathogenicity. The polypeptide is Cell pattern formation-associated protein StuA (Gibberella zeae (strain ATCC MYA-4620 / CBS 123657 / FGSC 9075 / NRRL 31084 / PH-1) (Wheat head blight fungus)).